The primary structure comprises 119 residues: Fluoride-specific ion channel FluC (119 aa).

3 helical membrane-spanning segments follow: residues 37 to 54 (LFANWTGALLIGIFAETV), 61 to 83 (LLLITGFLGSLTTLSGFSLETVT), and 93 to 112 (ALSNIFLHTAGSLLLTWLGL). Gly69 and Thr72 together coordinate Na(+).

The protein belongs to the fluoride channel Fluc/FEX (TC 1.A.43) family.

It is found in the cell inner membrane. The catalysed reaction is fluoride(in) = fluoride(out). Its activity is regulated as follows. Na(+) is not transported, but it plays an essential structural role and its presence is essential for fluoride channel function. In terms of biological role, fluoride-specific ion channel. Important for reducing fluoride concentration in the cell, thus reducing its toxicity. The protein is Fluoride-specific ion channel FluC of Neisseria meningitidis serogroup C (strain 053442).